We begin with the raw amino-acid sequence, 413 residues long: MLDLKFIRENPELVRKAVADRNTDAPIDEILELDNSRRNLTQELDNLRAKRKIMAKQRDETAIEEGRVLRGQISTLESELSQVDEKLTDRLLRVPNIPDPSVPVGKDESENVVLYYRGEKRNFSFTPKPHWELGEALDIIDFDRGIKLSGSRFYILKGAGARLQRALIAFMLDLHTRKHDYTEIYPPYMIKRECLVASGNLPKFADNLYHDAEEDYWWVPTAEAPLTNLHRDEILSAEQLPIHYVAYTACFRREKMSAGKDVRGIKRLHQFDKVELYKYCKPEDSFAELEKMVADAEEIADALKIPYRLKQLVTADISFGSAKSYDIEMYSPGVDEWLEVSSCSNCTDFQGRRANVRFRRTSEAKPEFVHTLNGSGLALPRVMISVIENYQQPDGSIVIPEVLRPFMGVDVIR.

221–223 lines the L-serine pocket; it reads TAE. Residue 252–254 coordinates ATP; it reads RRE. Glu-275 provides a ligand contact to L-serine. An ATP-binding site is contributed by 339–342; the sequence is EVSS. Position 375 (Ser-375) interacts with L-serine.

Belongs to the class-II aminoacyl-tRNA synthetase family. Type-1 seryl-tRNA synthetase subfamily. In terms of assembly, homodimer. The tRNA molecule binds across the dimer.

The protein localises to the cytoplasm. It catalyses the reaction tRNA(Ser) + L-serine + ATP = L-seryl-tRNA(Ser) + AMP + diphosphate + H(+). The catalysed reaction is tRNA(Sec) + L-serine + ATP = L-seryl-tRNA(Sec) + AMP + diphosphate + H(+). Its pathway is aminoacyl-tRNA biosynthesis; selenocysteinyl-tRNA(Sec) biosynthesis; L-seryl-tRNA(Sec) from L-serine and tRNA(Sec): step 1/1. Its function is as follows. Catalyzes the attachment of serine to tRNA(Ser). Is also able to aminoacylate tRNA(Sec) with serine, to form the misacylated tRNA L-seryl-tRNA(Sec), which will be further converted into selenocysteinyl-tRNA(Sec). This is Serine--tRNA ligase from Dehalococcoides mccartyi (strain ATCC BAA-2100 / JCM 16839 / KCTC 5957 / BAV1).